The chain runs to 179 residues: Protein HEADING DATE 3A (179 aa).

This sequence belongs to the phosphatidylethanolamine-binding protein family. As to expression, expressed in the inner region of the SAM, stem and leaf blade vascular tissues (at protein level).

The protein resides in the cytoplasm. Its subcellular location is the nucleus. Probable mobile flower-promoting signal (florigen) that moves from the leaf to the shoot apical meristem (SAM) and induces flowering. Promotes the transition from vegetative growth to flowering downstream of HD1 and EHD1 under short day (SD) conditions. Acts upstream of MADS14 and MADS15. This chain is Protein HEADING DATE 3A (HD3A), found in Oryza sativa subsp. japonica (Rice).